A 647-amino-acid polypeptide reads, in one-letter code: MNALLELKGIERSYPAGEQQIKVLDDVTLSIYAGEMVAIIGASGSGKSTLMNILGCLDQPSNGEYRVAGQNVAELNNDELAALRREHFGFIFQRYHLLTHLTAEQNVEIPAIYAGAAKAARRQRAIELLGRLGLEDRIYYQPGQLSGGQQQRVSIARALMNGGQVILADEPTGALDSHSGEEVMAILKQLCEQGHTVIIVTHDPKIAAQAQRIIEIKDGHIMSDSGTQVSRKITQTPSLTSKISSIRQIFGRFNEALFMAWRAMVVNKMRTLLTMLGIIIGIASVVTILVIGDAARASVLSDIKEIATNTIDIYPGEDFGIDDPVSKQALKIADADAIKVQPYILAVSPEIEGQMRLRKGNIDVSSKVTGVGDEYFQVYALRFAQGIGFSLDMIRRQGQVVVIDKNTQRKLFPHQKNVIGEVILVGNMPATIVGVIANRESAFGNSKLLHIWLPYSTMTSRLMNRSYLDSITVRVKDDYNSKDAEKMIVQLLTLRHGKKDIFTDNVDMLVKAAEKTAHTLQLFLTMVAVISLIVGGIGVMNIMLVSVTERTREIGIRMAVGARTSDVRQQFLIEAILVCLVGGVLGIGLSYTIAFIAQLALPGWHFVFQPIALLSAFACSTAIGVIFGFLPARNAARLDPIEALARE.

In terms of domain architecture, ABC transporter spans 5 to 243 (LELKGIERSY…TQTPSLTSKI (239 aa)). 41 to 48 (GASGSGKS) serves as a coordination point for ATP. 4 helical membrane-spanning segments follow: residues 272–292 (LLTM…LVIG), 522–542 (LFLT…VMNI), 576–596 (ILVC…IAFI), and 610–630 (PIAL…FGFL).

The protein belongs to the ABC transporter superfamily. Macrolide exporter (TC 3.A.1.122) family. In terms of assembly, homodimer. Part of the tripartite efflux system MacAB-TolC, which is composed of an inner membrane transporter, MacB, a periplasmic membrane fusion protein, MacA, and an outer membrane component, TolC. The complex forms a large protein conduit and can translocate molecules across both the inner and outer membranes. Interacts with MacA.

It is found in the cell inner membrane. Part of the tripartite efflux system MacAB-TolC. MacB is a non-canonical ABC transporter that contains transmembrane domains (TMD), which form a pore in the inner membrane, and an ATP-binding domain (NBD), which is responsible for energy generation. Confers resistance against macrolides. This is Macrolide export ATP-binding/permease protein MacB from Photorhabdus laumondii subsp. laumondii (strain DSM 15139 / CIP 105565 / TT01) (Photorhabdus luminescens subsp. laumondii).